Here is a 275-residue protein sequence, read N- to C-terminus: Shikimate dehydrogenase (NADP(+)) (275 aa).

Shikimate-binding positions include 15 to 17 (SKS) and threonine 62. Catalysis depends on lysine 66, which acts as the Proton acceptor. Glutamate 78 contacts NADP(+). Residues asparagine 87 and aspartate 102 each contribute to the shikimate site. Residues 127 to 131 (GAGGA), 151 to 156 (NRTPQK), and methionine 215 contribute to the NADP(+) site. Tyrosine 217 serves as a coordination point for shikimate. Glycine 239 provides a ligand contact to NADP(+).

Belongs to the shikimate dehydrogenase family. As to quaternary structure, homodimer.

The catalysed reaction is shikimate + NADP(+) = 3-dehydroshikimate + NADPH + H(+). The protein operates within metabolic intermediate biosynthesis; chorismate biosynthesis; chorismate from D-erythrose 4-phosphate and phosphoenolpyruvate: step 4/7. Involved in the biosynthesis of the chorismate, which leads to the biosynthesis of aromatic amino acids. Catalyzes the reversible NADPH linked reduction of 3-dehydroshikimate (DHSA) to yield shikimate (SA). This is Shikimate dehydrogenase (NADP(+)) from Nitrosospira multiformis (strain ATCC 25196 / NCIMB 11849 / C 71).